The sequence spans 89 residues: Small ribosomal subunit protein uS14A (89 aa).

It belongs to the universal ribosomal protein uS14 family. In terms of assembly, part of the 30S ribosomal subunit. Contacts proteins S3 and S10.

Binds 16S rRNA, required for the assembly of 30S particles and may also be responsible for determining the conformation of the 16S rRNA at the A site. The protein is Small ribosomal subunit protein uS14A of Lactiplantibacillus plantarum (strain ATCC BAA-793 / NCIMB 8826 / WCFS1) (Lactobacillus plantarum).